A 302-amino-acid polypeptide reads, in one-letter code: Probable alpha-L-glutamate ligase (302 aa).

The 184-residue stretch at Met-104–Glu-287 folds into the ATP-grasp domain. Residues Lys-141, Glu-178–Phe-179, Asp-187, and Arg-211–Asn-213 each bind ATP. Residues Asp-248, Glu-260, and Asn-262 each coordinate Mg(2+). Residues Asp-248, Glu-260, and Asn-262 each contribute to the Mn(2+) site.

Belongs to the RimK family. Mg(2+) is required as a cofactor. The cofactor is Mn(2+).

The sequence is that of Probable alpha-L-glutamate ligase from Psychromonas ingrahamii (strain DSM 17664 / CCUG 51855 / 37).